A 644-amino-acid polypeptide reads, in one-letter code: Chaperone protein DnaK (644 aa).

Thr199 carries the post-translational modification Phosphothreonine; by autocatalysis. The disordered stretch occupies residues 603-644; sequence YAKKSSEGQAAQGQTQSQESTKPAEEGVVDAEFEEVKEEDKK. Over residues 609-623 the composition is skewed to polar residues; that stretch reads EGQAAQGQTQSQEST. Acidic residues predominate over residues 629–644; sequence GVVDAEFEEVKEEDKK.

This sequence belongs to the heat shock protein 70 family.

Its function is as follows. Acts as a chaperone. This Legionella pneumophila (strain Corby) protein is Chaperone protein DnaK.